The chain runs to 175 residues: Peptide deformylase (175 aa).

Cys96 and His138 together coordinate Fe cation. Glu139 is an active-site residue. His142 contributes to the Fe cation binding site.

It belongs to the polypeptide deformylase family. Fe(2+) serves as cofactor.

It catalyses the reaction N-terminal N-formyl-L-methionyl-[peptide] + H2O = N-terminal L-methionyl-[peptide] + formate. Functionally, removes the formyl group from the N-terminal Met of newly synthesized proteins. Requires at least a dipeptide for an efficient rate of reaction. N-terminal L-methionine is a prerequisite for activity but the enzyme has broad specificity at other positions. The sequence is that of Peptide deformylase from Helicobacter acinonychis (strain Sheeba).